The chain runs to 650 residues: Acetyl-coenzyme A synthetase (650 aa).

CoA is bound by residues 191–194 (RGGR), T311, and N335. Residues 387 to 389 (GEP), 411 to 416 (DTWWQT), D500, and R515 each bind ATP. Residue S523 coordinates CoA. Residue R526 coordinates ATP. Positions 537, 539, and 542 each coordinate Mg(2+). R584 lines the CoA pocket. N6-acetyllysine is present on K609.

It belongs to the ATP-dependent AMP-binding enzyme family. It depends on Mg(2+) as a cofactor. Post-translationally, acetylated. Deacetylation by the SIR2-homolog deacetylase activates the enzyme.

It catalyses the reaction acetate + ATP + CoA = acetyl-CoA + AMP + diphosphate. Catalyzes the conversion of acetate into acetyl-CoA (AcCoA), an essential intermediate at the junction of anabolic and catabolic pathways. AcsA undergoes a two-step reaction. In the first half reaction, AcsA combines acetate with ATP to form acetyl-adenylate (AcAMP) intermediate. In the second half reaction, it can then transfer the acetyl group from AcAMP to the sulfhydryl group of CoA, forming the product AcCoA. The chain is Acetyl-coenzyme A synthetase from Shewanella baltica (strain OS155 / ATCC BAA-1091).